An 88-amino-acid polypeptide reads, in one-letter code: Small ribosomal subunit protein uS15 (88 aa).

Belongs to the universal ribosomal protein uS15 family. Part of the 30S ribosomal subunit. Forms a bridge to the 50S subunit in the 70S ribosome, contacting the 23S rRNA.

In terms of biological role, one of the primary rRNA binding proteins, it binds directly to 16S rRNA where it helps nucleate assembly of the platform of the 30S subunit by binding and bridging several RNA helices of the 16S rRNA. Its function is as follows. Forms an intersubunit bridge (bridge B4) with the 23S rRNA of the 50S subunit in the ribosome. In Geotalea daltonii (strain DSM 22248 / JCM 15807 / FRC-32) (Geobacter daltonii), this protein is Small ribosomal subunit protein uS15.